Reading from the N-terminus, the 162-residue chain is NADH-quinone oxidoreductase subunit I 2 (162 aa).

4Fe-4S ferredoxin-type domains lie at leucine 53–glutamate 83 and threonine 93–isoleucine 122. [4Fe-4S] cluster-binding residues include cysteine 63, cysteine 66, cysteine 69, cysteine 73, cysteine 102, cysteine 105, cysteine 108, and cysteine 112.

This sequence belongs to the complex I 23 kDa subunit family. In terms of assembly, NDH-1 is composed of 14 different subunits. Subunits NuoA, H, J, K, L, M, N constitute the membrane sector of the complex. It depends on [4Fe-4S] cluster as a cofactor.

It is found in the cell inner membrane. The enzyme catalyses a quinone + NADH + 5 H(+)(in) = a quinol + NAD(+) + 4 H(+)(out). Its function is as follows. NDH-1 shuttles electrons from NADH, via FMN and iron-sulfur (Fe-S) centers, to quinones in the respiratory chain. The immediate electron acceptor for the enzyme in this species is believed to be ubiquinone. Couples the redox reaction to proton translocation (for every two electrons transferred, four hydrogen ions are translocated across the cytoplasmic membrane), and thus conserves the redox energy in a proton gradient. The chain is NADH-quinone oxidoreductase subunit I 2 from Nitrosococcus oceani (strain ATCC 19707 / BCRC 17464 / JCM 30415 / NCIMB 11848 / C-107).